A 426-amino-acid chain; its full sequence is Nucleolar protein 12 (426 aa).

The disordered stretch occupies residues 26–128 (QSSGPVDTLE…SKRASRPDMK (103 aa)). Basic and acidic residues predominate over residues 87–105 (LEEKYMQQVLKEDSDHESE). RRM domains follow at residues 137–251 (RTVF…SVAH) and 259–339 (RSVF…RCRN). Basic residues predominate over residues 401–415 (KARSKTGRVTKRSQA). The tract at residues 401-426 (KARSKTGRVTKRSQAFKKAEANKKQK) is disordered. Over residues 417–426 (KKAEANKKQK) the composition is skewed to basic and acidic residues.

Belongs to the RRM RBM34 family.

The protein resides in the nucleus. The protein localises to the nucleolus. Its function is as follows. Involved in pre-25S rRNA processing. In Eremothecium gossypii (strain ATCC 10895 / CBS 109.51 / FGSC 9923 / NRRL Y-1056) (Yeast), this protein is Nucleolar protein 12 (NOP12).